Reading from the N-terminus, the 1146-residue chain is Nitrogen permease regulator 3 (1146 aa).

Residues 1-25 form the signal peptide; sequence MDECLPNSCLLGVHLVISTHSGPQI. The residue at position 76 (Ser76) is a Phosphoserine. 4 disordered regions span residues 90–159, 177–221, 237–340, and 440–466; these read AITP…LSDS, SSLS…SPQM, SGTN…HHYH, and GRWR…ISRK. Positions 105-123 are enriched in polar residues; the sequence is LPPTRSHANTVGSQSSIPA. 2 stretches are compositionally biased toward low complexity: residues 150–159 and 177–196; these read ETSSSGLSDS and SSLS…SSSP. 3 stretches are compositionally biased toward polar residues: residues 201 to 221, 237 to 253, and 277 to 303; these read LSRT…SPQM, SGTN…SQNF, and KPSQ…AFTG. Positions 304 to 315 are enriched in low complexity; the sequence is SCSISSKKSLSS. Residues 323-334 are compositionally biased toward polar residues; sequence LRNSSLNDTPGQ. Over residues 441–455 the composition is skewed to basic residues; that stretch reads RWRKSKHKNKTRSKR. A phosphoserine mark is found at Ser486 and Ser987. The tract at residues 979–1047 is disordered; the sequence is KTNTARRPSM…SRVDDRDDNE (69 aa). Composition is skewed to basic and acidic residues over residues 986-1004 and 1025-1042; these read PSMD…DGQS and NNKD…RVDD.

The protein belongs to the NPR3 family. In terms of assembly, component of the SEA complex composed of at least IML1/SEA1, RTC1/SEA2, MTC5/SEA3, NPR2, NPR3, SEA4, SEC13 and SEH1. Forms a heterodimer with NPR2.

It is found in the vacuole membrane. Component of the SEA complex which coats the vacuolar membrane and is involved in intracellular trafficking, autophagy, response to nitrogen starvation, and amino acid biogenesis. Mediates inactivation of the TORC1 complex in response to amino acid starvation. Required for meiotic nuclear division. The sequence is that of Nitrogen permease regulator 3 (NPR3) from Saccharomyces cerevisiae (strain ATCC 204508 / S288c) (Baker's yeast).